The following is a 195-amino-acid chain: Endoribonuclease YbeY (195 aa).

Zn(2+) is bound by residues H153, H157, and H163.

It belongs to the endoribonuclease YbeY family. The cofactor is Zn(2+).

The protein resides in the cytoplasm. Single strand-specific metallo-endoribonuclease involved in late-stage 70S ribosome quality control and in maturation of the 3' terminus of the 16S rRNA. The chain is Endoribonuclease YbeY from Prochlorococcus marinus (strain SARG / CCMP1375 / SS120).